A 508-amino-acid polypeptide reads, in one-letter code: Steroid 17-alpha-hydroxylase/17,20 lyase (508 aa).

Asn202 serves as a coordination point for substrate. A heme-binding site is contributed by Cys442.

Belongs to the cytochrome P450 family. It depends on heme as a cofactor.

The protein localises to the endoplasmic reticulum membrane. It is found in the microsome membrane. It catalyses the reaction a C21-steroid + reduced [NADPH--hemoprotein reductase] + O2 = a 17alpha-hydroxy-C21-steroid + oxidized [NADPH--hemoprotein reductase] + H2O + H(+). It carries out the reaction progesterone + reduced [NADPH--hemoprotein reductase] + O2 = 17alpha-hydroxyprogesterone + oxidized [NADPH--hemoprotein reductase] + H2O + H(+). The catalysed reaction is pregnenolone + reduced [NADPH--hemoprotein reductase] + O2 = 17alpha-hydroxypregnenolone + oxidized [NADPH--hemoprotein reductase] + H2O + H(+). The enzyme catalyses 17alpha-hydroxyprogesterone + reduced [NADPH--hemoprotein reductase] + O2 = androst-4-ene-3,17-dione + acetate + oxidized [NADPH--hemoprotein reductase] + H2O + 2 H(+). It catalyses the reaction 17alpha-hydroxyprogesterone + reduced [NADPH--hemoprotein reductase] + O2 = 16alpha,17alpha-dihydroxyprogesterone + oxidized [NADPH--hemoprotein reductase] + H2O + H(+). It carries out the reaction 16alpha,17alpha-dihydroxyprogesterone + reduced [NADPH--hemoprotein reductase] + O2 = 6beta,16alpha,17alpha-trihydroxyprogesterone + oxidized [NADPH--hemoprotein reductase] + H2O + H(+). The catalysed reaction is 17alpha-hydroxypregnenolone + reduced [NADPH--hemoprotein reductase] + O2 = 3beta-hydroxyandrost-5-en-17-one + acetate + oxidized [NADPH--hemoprotein reductase] + H2O + 2 H(+). The enzyme catalyses 16alpha,17alpha-dihydroxypregnenolone + reduced [NADPH--hemoprotein reductase] + O2 = 3beta,16alpha-dihydroxy-androst-5-en-17-one + acetate + oxidized [NADPH--hemoprotein reductase] + H2O + 2 H(+). It catalyses the reaction 3beta-hydroxyandrost-5-en-17-one + reduced [NADPH--hemoprotein reductase] + O2 = 3beta,16alpha-dihydroxy-androst-5-en-17-one + oxidized [NADPH--hemoprotein reductase] + H2O + H(+). It carries out the reaction androst-4-ene-3,17-dione + reduced [NADPH--hemoprotein reductase] + O2 = 16alpha-hydroxyandrost-4-ene-3,17-dione + oxidized [NADPH--hemoprotein reductase] + H2O + H(+). The protein operates within steroid hormone biosynthesis. It functions in the pathway steroid biosynthesis; glucocorticoid biosynthesis. With respect to regulation, regulated predominantly by intracellular cAMP levels. The 17,20-lyase activity is stimulated by cytochrome b5, which acts as an allosteric effector increasing the Vmax of the lyase activity. A cytochrome P450 monooxygenase involved in corticoid and androgen biosynthesis. Catalyzes 17-alpha hydroxylation of C21 steroids, which is common for both pathways. A second oxidative step, required only for androgen synthesis, involves an acyl-carbon cleavage. The 17-alpha hydroxy intermediates, as part of adrenal glucocorticoids biosynthesis pathway, are precursors of cortisol. Hydroxylates steroid hormones, pregnenolone and progesterone to form 17-alpha hydroxy metabolites, followed by the cleavage of the C17-C20 bond to form C19 steroids, dehydroepiandrosterone (DHEA) and androstenedione. Has 16-alpha hydroxylase activity. Catalyzes 16-alpha hydroxylation of 17-alpha hydroxy pregnenolone, followed by the cleavage of the C17-C20 bond to form 16-alpha-hydroxy DHEA. Also 16-alpha hydroxylates androgens, relevant for estriol synthesis. Mechanistically, uses molecular oxygen inserting one oxygen atom into a substrate, and reducing the second into a water molecule, with two electrons provided by NADPH via cytochrome P450 reductase (CPR; NADPH-ferrihemoprotein reductase). This Pan troglodytes (Chimpanzee) protein is Steroid 17-alpha-hydroxylase/17,20 lyase (CYP17A1).